Here is a 447-residue protein sequence, read N- to C-terminus: Phosphoglucosamine mutase (447 aa).

Catalysis depends on Ser-100, which acts as the Phosphoserine intermediate. Positions 100, 240, 242, and 244 each coordinate Mg(2+). Ser-100 carries the phosphoserine modification.

This sequence belongs to the phosphohexose mutase family. Requires Mg(2+) as cofactor. Activated by phosphorylation.

The enzyme catalyses alpha-D-glucosamine 1-phosphate = D-glucosamine 6-phosphate. Catalyzes the conversion of glucosamine-6-phosphate to glucosamine-1-phosphate. The sequence is that of Phosphoglucosamine mutase from Clostridium botulinum (strain Alaska E43 / Type E3).